Reading from the N-terminus, the 234-residue chain is 2-amino-5-formylamino-6-ribosylaminopyrimidin-4(3H)-one 5'-monophosphate deformylase (234 aa).

Fe cation-binding residues include E29, H31, D40, and H109.

This sequence belongs to the creatininase superfamily. FAPy deformylase family. As to quaternary structure, homodimer. Requires Fe(2+) as cofactor. The cofactor is Zn(2+).

The catalysed reaction is 2-amino-5-formylamino-6-(5-phospho-D-ribosylamino)pyrimidin-4(3H)-one + H2O = 2,5-diamino-6-(1-D-ribosylamino)pyrimidin-4(3H)-one 5'-phosphate + formate + H(+). It participates in cofactor biosynthesis; coenzyme F420 biosynthesis. It functions in the pathway cofactor biosynthesis; riboflavin biosynthesis. Catalyzes the hydrolysis of the formamide of 2-amino-5-formylamino-6-ribosylamino-4(3H)-pyrimidinone 5'-monophosphate (FAPy) to form 2,5-diamino-6-ribosylamino-4(3H)-pyrimidinone 5'-phosphate (APy). In Methanobrevibacter ruminantium (strain ATCC 35063 / DSM 1093 / JCM 13430 / OCM 146 / M1) (Methanobacterium ruminantium), this protein is 2-amino-5-formylamino-6-ribosylaminopyrimidin-4(3H)-one 5'-monophosphate deformylase.